Reading from the N-terminus, the 253-residue chain is NADH-quinone oxidoreductase subunit C (253 aa).

Disordered regions lie at residues M1–P33 and I234–S253.

It belongs to the complex I 30 kDa subunit family. As to quaternary structure, NDH-1 is composed of 14 different subunits. Subunits NuoB, C, D, E, F, and G constitute the peripheral sector of the complex.

Its subcellular location is the cell membrane. It carries out the reaction a quinone + NADH + 5 H(+)(in) = a quinol + NAD(+) + 4 H(+)(out). Its function is as follows. NDH-1 shuttles electrons from NADH, via FMN and iron-sulfur (Fe-S) centers, to quinones in the respiratory chain. The immediate electron acceptor for the enzyme in this species is believed to be a menaquinone. Couples the redox reaction to proton translocation (for every two electrons transferred, four hydrogen ions are translocated across the cytoplasmic membrane), and thus conserves the redox energy in a proton gradient. The polypeptide is NADH-quinone oxidoreductase subunit C (Nocardia farcinica (strain IFM 10152)).